Reading from the N-terminus, the 172-residue chain is RNA pyrophosphohydrolase (172 aa).

The Nudix hydrolase domain maps to 6–149 (GYRLNVGIVI…KRDVYRRAMK (144 aa)). The short motif at 38–59 (GGIDEGETPEQAMYRELYEEVG) is the Nudix box element.

This sequence belongs to the Nudix hydrolase family. RppH subfamily. The cofactor is a divalent metal cation.

Its function is as follows. Accelerates the degradation of transcripts by removing pyrophosphate from the 5'-end of triphosphorylated RNA, leading to a more labile monophosphorylated state that can stimulate subsequent ribonuclease cleavage. This Vibrio atlanticus (strain LGP32) (Vibrio splendidus (strain Mel32)) protein is RNA pyrophosphohydrolase.